The chain runs to 151 residues: Large ribosomal subunit protein bL9 (151 aa).

This sequence belongs to the bacterial ribosomal protein bL9 family.

Its function is as follows. Binds to the 23S rRNA. The chain is Large ribosomal subunit protein bL9 from Lactobacillus delbrueckii subsp. bulgaricus (strain ATCC 11842 / DSM 20081 / BCRC 10696 / JCM 1002 / NBRC 13953 / NCIMB 11778 / NCTC 12712 / WDCM 00102 / Lb 14).